A 350-amino-acid chain; its full sequence is S-adenosylmethionine:tRNA ribosyltransferase-isomerase (350 aa).

Belongs to the QueA family. As to quaternary structure, monomer.

The protein localises to the cytoplasm. It catalyses the reaction 7-aminomethyl-7-carbaguanosine(34) in tRNA + S-adenosyl-L-methionine = epoxyqueuosine(34) in tRNA + adenine + L-methionine + 2 H(+). It participates in tRNA modification; tRNA-queuosine biosynthesis. Transfers and isomerizes the ribose moiety from AdoMet to the 7-aminomethyl group of 7-deazaguanine (preQ1-tRNA) to give epoxyqueuosine (oQ-tRNA). This Bacillus cytotoxicus (strain DSM 22905 / CIP 110041 / 391-98 / NVH 391-98) protein is S-adenosylmethionine:tRNA ribosyltransferase-isomerase.